A 284-amino-acid polypeptide reads, in one-letter code: L-ribulose-5-phosphate 3-epimerase UlaE (284 aa).

This sequence belongs to the L-ribulose-5-phosphate 3-epimerase family.

It carries out the reaction L-ribulose 5-phosphate = L-xylulose 5-phosphate. It functions in the pathway cofactor degradation; L-ascorbate degradation; D-xylulose 5-phosphate from L-ascorbate: step 3/4. Functionally, catalyzes the isomerization of L-xylulose-5-phosphate to L-ribulose-5-phosphate. Is involved in the anaerobic L-ascorbate utilization. This Escherichia coli O45:K1 (strain S88 / ExPEC) protein is L-ribulose-5-phosphate 3-epimerase UlaE.